A 547-amino-acid chain; its full sequence is Chaperonin GroEL (547 aa).

Residues 30-33 (TLGP), Lys51, 87-91 (DGTTT), Gly415, 479-481 (NAA), and Asp495 each bind ATP.

Belongs to the chaperonin (HSP60) family. In terms of assembly, forms a cylinder of 14 subunits composed of two heptameric rings stacked back-to-back. Interacts with the co-chaperonin GroES.

Its subcellular location is the cytoplasm. The catalysed reaction is ATP + H2O + a folded polypeptide = ADP + phosphate + an unfolded polypeptide.. Together with its co-chaperonin GroES, plays an essential role in assisting protein folding. The GroEL-GroES system forms a nano-cage that allows encapsulation of the non-native substrate proteins and provides a physical environment optimized to promote and accelerate protein folding. The polypeptide is Chaperonin GroEL (Pseudomonas paraeruginosa (strain DSM 24068 / PA7) (Pseudomonas aeruginosa (strain PA7))).